We begin with the raw amino-acid sequence, 279 residues long: Putative pyruvate, phosphate dikinase regulatory protein (279 aa).

156-163 (GISRVGKT) is an ADP binding site.

This sequence belongs to the pyruvate, phosphate/water dikinase regulatory protein family. PDRP subfamily.

It carries out the reaction N(tele)-phospho-L-histidyl/L-threonyl-[pyruvate, phosphate dikinase] + ADP = N(tele)-phospho-L-histidyl/O-phospho-L-threonyl-[pyruvate, phosphate dikinase] + AMP + H(+). The catalysed reaction is N(tele)-phospho-L-histidyl/O-phospho-L-threonyl-[pyruvate, phosphate dikinase] + phosphate + H(+) = N(tele)-phospho-L-histidyl/L-threonyl-[pyruvate, phosphate dikinase] + diphosphate. Functionally, bifunctional serine/threonine kinase and phosphorylase involved in the regulation of the pyruvate, phosphate dikinase (PPDK) by catalyzing its phosphorylation/dephosphorylation. In Chloroflexus aurantiacus (strain ATCC 29366 / DSM 635 / J-10-fl), this protein is Putative pyruvate, phosphate dikinase regulatory protein.